The chain runs to 654 residues: MSGSQSSGSPGSPGPPGPPGRSALVVYGSETGNAQDVAEEVGALAERLHFTTQISELNHVKPESLRSYTIVVFAVSTTGQGDLPANARTFWRSLLLKKLPPTFLSGVRFTWFGLGDSSYPKFNWAARKLYKRLLQLGADEIYPGGEADHQHSSGLEGTFIPWLAGFRKHLLDKYPLPPGQDPIPDDVQLPPKWVLRLRDQEAASEDVSPPDAMGAAVTGDFPDSYRLDNDHRPLHDSLTATLVQNKRVTPQTHWQDVRHLILTVSDPISYAPGDVLTITPKNTAEDVQSLIEMMGWQEQADQLVSLVPRDSTRSTNELPSPPIHSLDSYPRLTLRELLINYLDIRAIPRRSFFAAIAHYTTYEMHKERLLEFTNPEYLDEFWDYTTRPRRSILEILHEFDTVKIPWQHATSTFPIIRARQFSIASGGELKRTSVGGARFELLIAIVKYRTVIKKIREGVCTKYISNLRPGSTLKIQLQRGGLNSSVGQLVGPTMLIGPGTGVAPLRSMLWEKAAIVKSYQEKNPGVDPPIEPTILVYGGRNRAADFFFEDEWQQLSDLIKLKVLTAFSRDQKQKVYVQDVIRENSSLVFNLLHDKGGAVFVCGSSGRMPQAVRETLTEAFQYGNDAGTQPFSRREAEDYLVGMEKTGRYKQETW.

The segment covering Met1–Pro10 has biased composition (low complexity). The interval Met1 to Ser22 is disordered. Residues Ala23–Arg167 form the Flavodoxin-like domain. FMN is bound by residues Ser29–Ala34, Ser76–Gly79, and Leu114–Asn123. Residues His235–Ser485 enclose the FAD-binding FR-type domain. Residues Arg389, Arg419–Ser422, and Gly458–Thr461 each bind FAD. Residues Thr500, Ser568–Arg569, and Lys574–Gln578 each bind NADP(+). FAD is bound at residue Trp654.

It belongs to the NADPH-dependent diflavin oxidoreductase NDOR1 family. This sequence in the N-terminal section; belongs to the flavodoxin family. The protein in the C-terminal section; belongs to the flavoprotein pyridine nucleotide cytochrome reductase family. In terms of assembly, interacts with dre2; as part of the cytosolic iron-sulfur (Fe-S) protein assembly (CIA) machinery. The cofactor is FAD. FMN serves as cofactor.

It localises to the cytoplasm. Its subcellular location is the mitochondrion. The catalysed reaction is 2 oxidized [2Fe-2S]-[protein] + NADPH = 2 reduced [2Fe-2S]-[protein] + NADP(+) + H(+). Its function is as follows. NADPH-dependent reductase which is a central component of the cytosolic iron-sulfur (Fe-S) protein assembly (CIA) machinery. Transfers electrons from NADPH via its FAD and FMN prosthetic groups to the [2Fe-2S] cluster of dre2, another key component of the CIA machinery. In turn, this reduced cluster provides electrons for assembly of cytosolic iron-sulfur cluster proteins. Positively controls H(2)O(2)-induced cell death. The polypeptide is NADPH-dependent diflavin oxidoreductase 1 (Emericella nidulans (strain FGSC A4 / ATCC 38163 / CBS 112.46 / NRRL 194 / M139) (Aspergillus nidulans)).